Consider the following 290-residue polypeptide: Ribosomal protein L11 methyltransferase (290 aa).

T136, G159, D181, and N228 together coordinate S-adenosyl-L-methionine.

This sequence belongs to the methyltransferase superfamily. PrmA family.

The protein localises to the cytoplasm. The catalysed reaction is L-lysyl-[protein] + 3 S-adenosyl-L-methionine = N(6),N(6),N(6)-trimethyl-L-lysyl-[protein] + 3 S-adenosyl-L-homocysteine + 3 H(+). Functionally, methylates ribosomal protein L11. The chain is Ribosomal protein L11 methyltransferase from Allorhizobium ampelinum (strain ATCC BAA-846 / DSM 112012 / S4) (Agrobacterium vitis (strain S4)).